The chain runs to 131 residues: Ribonuclease VapC13 (131 aa).

A PINc domain is found at 2 to 128 (ILVDSNIPMY…RGFDSYPGIK (127 aa)). Mg(2+)-binding residues include aspartate 5 and aspartate 99.

The protein belongs to the PINc/VapC protein family. Mg(2+) is required as a cofactor.

The protein localises to the secreted. Its function is as follows. Toxic component of a type II toxin-antitoxin (TA) system. An RNase. The cognate antitoxin is VapB13. This Mycobacterium tuberculosis (strain ATCC 25618 / H37Rv) protein is Ribonuclease VapC13.